The sequence spans 131 residues: MTSYDQIWETFLNNCETSDFDVPQQEEDIYKSIRNAILHFNNRLRDNLKADNSTETVNRELSEDDLLILAHFLRYIFLLNKKTLFENTWQPFTNDVGIKNFGTQLNSLKQSVMDQKDEIERLILNAAVDYL.

In Bacillus subtilis (strain 168), this protein is SPbeta prophage-derived uncharacterized protein YomZ (yomZ).